The sequence spans 137 residues: Large ribosomal subunit protein uL16 (137 aa).

The protein belongs to the universal ribosomal protein uL16 family. As to quaternary structure, part of the 50S ribosomal subunit.

Binds 23S rRNA and is also seen to make contacts with the A and possibly P site tRNAs. This Brucella abortus (strain S19) protein is Large ribosomal subunit protein uL16.